The chain runs to 181 residues: ECF RNA polymerase sigma factor EcfG (181 aa).

A sigma-70 factor domain-2 region spans residues 15 to 77 (VPSLRAFAIS…FRSDYRKRRR (63 aa)). The tract at residues 103–155 (EEFRAALDKLPQDQREALILVGASGFSYEDAAAICGCAVGTIKSRVNRARSKL) is sigma-70 factor domain-4.

It belongs to the sigma-70 factor family. ECF subfamily.

Functionally, sigma factors are initiation factors that promote the attachment of RNA polymerase to specific initiation sites and are then released. Regulates expression of hpnP under a variety of stresses, including high temperature, pH stress, and presence of nonionic osmolytes. The sequence is that of ECF RNA polymerase sigma factor EcfG from Rhodopseudomonas palustris (strain TIE-1).